Reading from the N-terminus, the 193-residue chain is Proton-translocating ferredoxin:NAD(+) oxidoreductase complex subunit A (193 aa).

The next 6 helical transmembrane spans lie at 11–31 (AVVV…FFGV), 39–59 (VGMG…AWVV), 62–82 (FVLI…LLIA), 102–122 (MWGI…VPIL), 134–154 (VVNA…MASL), and 171–191 (GVAF…SGMI).

The protein belongs to the NqrDE/RnfAE family. In terms of assembly, the complex is composed of six subunits: RnfA, RnfB, RnfC, RnfD, RnfE and RnfG.

Its subcellular location is the cell membrane. In terms of biological role, part of a membrane-bound complex that couples electron transfer with translocation of ions across the membrane. Couples electron transfer from reduced ferredoxin to NAD(+) with translocation of H(+) out of the cell. Essential for energy conservation during autotrophic growth. Contributes to ATP synthesis during heterotrophic growth. The chain is Proton-translocating ferredoxin:NAD(+) oxidoreductase complex subunit A from Clostridium ljungdahlii (strain ATCC 55383 / DSM 13528 / PETC).